Here is an 84-residue protein sequence, read N- to C-terminus: Large ribosomal subunit protein bL31B (84 aa).

The protein belongs to the bacterial ribosomal protein bL31 family. Type B subfamily. In terms of assembly, part of the 50S ribosomal subunit.

The polypeptide is Large ribosomal subunit protein bL31B (Acinetobacter baumannii (strain AB307-0294)).